A 191-amino-acid polypeptide reads, in one-letter code: Inosine triphosphate pyrophosphatase (191 aa).

ITP is bound at residue 15 to 20; it reads TGNTNK. Residue Glu43 coordinates Mg(2+). Residues Lys55, 71–72, Lys88, 147–150, Lys168, and 173–174 contribute to the ITP site; these read DT, FGWD, and HR.

The protein belongs to the HAM1 NTPase family. Homodimer. It depends on Mg(2+) as a cofactor. Requires Mn(2+) as cofactor.

Its subcellular location is the cytoplasm. The protein resides in the nucleus. It catalyses the reaction ITP + H2O = IMP + diphosphate + H(+). It carries out the reaction dITP + H2O = dIMP + diphosphate + H(+). The enzyme catalyses XTP + H2O = XMP + diphosphate + H(+). Functionally, pyrophosphatase that hydrolyzes non-canonical purine nucleotides such as inosine triphosphate (ITP), deoxyinosine triphosphate (dITP) or xanthosine 5'-triphosphate (XTP) to their respective monophosphate derivatives. The enzyme does not distinguish between the deoxy- and ribose forms. Probably excludes non-canonical purines from RNA and DNA precursor pools, thus preventing their incorporation into RNA and DNA and avoiding chromosomal lesions. The polypeptide is Inosine triphosphate pyrophosphatase (Chaetomium globosum (strain ATCC 6205 / CBS 148.51 / DSM 1962 / NBRC 6347 / NRRL 1970) (Soil fungus)).